The chain runs to 233 residues: Small ribosomal subunit protein uS3 (233 aa).

In terms of domain architecture, KH type-2 spans 39-107 (VREFLKAKLK…PVHVNIEEVR (69 aa)). The segment at 209–233 (PGQVSAEPTQPEKKMRKGGRNAAAN) is disordered.

It belongs to the universal ribosomal protein uS3 family. Part of the 30S ribosomal subunit. Forms a tight complex with proteins S10 and S14.

Functionally, binds the lower part of the 30S subunit head. Binds mRNA in the 70S ribosome, positioning it for translation. The polypeptide is Small ribosomal subunit protein uS3 (Laribacter hongkongensis (strain HLHK9)).